Here is a 473-residue protein sequence, read N- to C-terminus: MSKNIGKIVQVIGAVVDVEFSDGNLPNIFTALEIKNPNNTDAPELICEVAQHLGDNVVRTIAMDATEGLVRGMDAVDTGQPIMVPVGKPSVGRILNVIGRPVDEMGPINAEKYYPIHRPAPAFTDQNTKVELLETGIKVVDLLVPFPKGGKMGLFGGAGVGKTVILMEMINNIAKQHGGSSVFAGVGERTREGNDLYHELKDAGVLERATLVYGQMNEPPGARARVALTALACAEYFRDEEHQDVLLFIDNIFRFTQAGSEVSALLGRMPSAVGYQPTLGTDLGSLQERITSTNTGSITSVQAVYVPADDLTDPAPATTFSHLDGTLVLSRQIAELGIYPAVDPLDSTSRILDPNVVGEEHYAVARRVQMVLQKYKELQDIIAILGMDELSDEDKLTVARARRIQRFLSQPFHVAETFTGTPGQYVNLEDTIKGFKGILDGAYDHMAEGDFYMLGGIEQAVAKYEQRKLQEEN.

Residue 156 to 163 (GGAGVGKT) participates in ATP binding.

The protein belongs to the ATPase alpha/beta chains family. In terms of assembly, F-type ATPases have 2 components, CF(1) - the catalytic core - and CF(0) - the membrane proton channel. CF(1) has five subunits: alpha(3), beta(3), gamma(1), delta(1), epsilon(1). CF(0) has three main subunits: a(1), b(2) and c(9-12). The alpha and beta chains form an alternating ring which encloses part of the gamma chain. CF(1) is attached to CF(0) by a central stalk formed by the gamma and epsilon chains, while a peripheral stalk is formed by the delta and b chains.

It localises to the cell inner membrane. It catalyses the reaction ATP + H2O + 4 H(+)(in) = ADP + phosphate + 5 H(+)(out). In terms of biological role, produces ATP from ADP in the presence of a proton gradient across the membrane. The catalytic sites are hosted primarily by the beta subunits. The protein is ATP synthase subunit beta of Desulfovibrio desulfuricans (strain ATCC 27774 / DSM 6949 / MB).